The chain runs to 46 residues: Diuretic hormone (46 aa).

Isoleucine amide is present on Ile-46.

Belongs to the sauvagine/corticotropin-releasing factor/urotensin I family.

It is found in the secreted. Functionally, regulation of fluid secretion. Stimulates primary urine secretion by Malpighian tubules and causes a dose-dependent stimulation of cAMP levels in the tubules. In Locusta migratoria (Migratory locust), this protein is Diuretic hormone.